We begin with the raw amino-acid sequence, 49 residues long: uncharacterized protein (49 aa).

Residues 20 to 42 (LFLVGLTIGKMATSRILSFLGFI) traverse the membrane as a helical segment.

It localises to the membrane. This is an uncharacterized protein from Dictyostelium discoideum (Social amoeba).